A 393-amino-acid polypeptide reads, in one-letter code: Homeobox protein knotted-1-like 4 (393 aa).

A compositionally biased stretch (polar residues) spans 1-13 (MAFHNNHFNHFTD). Disordered stretches follow at residues 1 to 39 (MAFH…PPNW) and 81 to 114 (QRGN…EKKE). One can recognise an ELK domain in the interval 286 to 306 (ELKHELKQGYKEKIVDIREEI). The homeobox; TALE-type DNA-binding region spans 307–370 (LRKRRAGKLP…NQRKRNWHSN (64 aa)). The segment at 363-393 (RKRNWHSNPSSSTVSKNKRRSNAGENSGRDR) is disordered. Residues 368-377 (HSNPSSSTVS) are compositionally biased toward polar residues.

Belongs to the TALE/KNOX homeobox family. As to quaternary structure, may form heterodimeric complex with the TALE/BELL proteins. Interacts with OFP1, OFP2, OFP4 and OFP12. Interacts with KNATM-B.

The protein resides in the nucleus. This is Homeobox protein knotted-1-like 4 (KNAT4) from Arabidopsis thaliana (Mouse-ear cress).